The chain runs to 192 residues: Phosphomevalonate kinase (192 aa).

Residues 17–23 (KRKSGKD) and R141 each bind ATP. N170 serves as a coordination point for substrate. 2 residues coordinate ATP: H171 and Q180.

As to quaternary structure, monomer.

It localises to the cytoplasm. The protein resides in the cytosol. It carries out the reaction (R)-5-phosphomevalonate + ATP = (R)-5-diphosphomevalonate + ADP. The protein operates within isoprenoid biosynthesis; isopentenyl diphosphate biosynthesis via mevalonate pathway; isopentenyl diphosphate from (R)-mevalonate: step 2/3. In terms of biological role, catalyzes the reversible ATP-dependent phosphorylation of mevalonate 5-phosphate to produce mevalonate diphosphate and ADP, a key step in the mevalonic acid mediated biosynthesis of isopentenyl diphosphate and other polyisoprenoid metabolites. The chain is Phosphomevalonate kinase (PMVK) from Bos taurus (Bovine).